The chain runs to 245 residues: Thiopurine S-methyltransferase (245 aa).

Trp-29 to Phe-40 provides a ligand contact to S-adenosyl-L-methionine. Phe-40 contacts substrate. Lys-58 carries the N6-acetyllysine modification. 3 residues coordinate S-adenosyl-L-methionine: Leu-69, Glu-90, and Arg-152.

It belongs to the class I-like SAM-binding methyltransferase superfamily. TPMT family. In terms of assembly, monomer.

The protein resides in the cytoplasm. It catalyses the reaction S-adenosyl-L-methionine + a thiopurine = S-adenosyl-L-homocysteine + a thiopurine S-methylether.. The chain is Thiopurine S-methyltransferase (TPMT) from Bos taurus (Bovine).